The following is a 409-amino-acid chain: LL-diaminopimelate aminotransferase (409 aa).

Residues tyrosine 15 and glycine 42 each contribute to the substrate site. Residues tyrosine 72, 108 to 109 (AK), tyrosine 132, asparagine 186, tyrosine 217, and 245 to 247 (SFS) contribute to the pyridoxal 5'-phosphate site. Positions 109, 132, and 186 each coordinate substrate. The residue at position 248 (lysine 248) is an N6-(pyridoxal phosphate)lysine. The pyridoxal 5'-phosphate site is built by arginine 256 and asparagine 291. 2 residues coordinate substrate: asparagine 291 and arginine 385.

This sequence belongs to the class-I pyridoxal-phosphate-dependent aminotransferase family. LL-diaminopimelate aminotransferase subfamily. In terms of assembly, homodimer. Pyridoxal 5'-phosphate serves as cofactor.

It carries out the reaction (2S,6S)-2,6-diaminopimelate + 2-oxoglutarate = (S)-2,3,4,5-tetrahydrodipicolinate + L-glutamate + H2O + H(+). It participates in amino-acid biosynthesis; L-lysine biosynthesis via DAP pathway; LL-2,6-diaminopimelate from (S)-tetrahydrodipicolinate (aminotransferase route): step 1/1. Its function is as follows. Involved in the synthesis of meso-diaminopimelate (m-DAP or DL-DAP), required for both lysine and peptidoglycan biosynthesis. Catalyzes the direct conversion of tetrahydrodipicolinate to LL-diaminopimelate. In Desulfosudis oleivorans (strain DSM 6200 / JCM 39069 / Hxd3) (Desulfococcus oleovorans), this protein is LL-diaminopimelate aminotransferase.